Consider the following 383-residue polypeptide: Serine protease 23 (383 aa).

The signal sequence occupies residues 1–23; sequence MAGIPGLLILLLVLLCVFMQVSP. N-linked (GlcNAc...) asparagine glycosylation occurs at asparagine 93. A disulfide bridge connects residues cysteine 160 and cysteine 176. The Charge relay system role is filled by histidine 175. N-linked (GlcNAc...) asparagine glycosylation occurs at asparagine 207. Residues aspartate 240 and serine 316 each act as charge relay system in the active site.

The protein belongs to the peptidase S1 family.

Its subcellular location is the secreted. The polypeptide is Serine protease 23 (Prss23) (Rattus norvegicus (Rat)).